The following is a 123-amino-acid chain: MALLKISVVVPEGEVYTGEVKSVVLPGVEGEFGVLYGHSNMITLLQAGVIEIETENQKEHIAINWGYAEVTNERVDILADGAVFIKKESDDRDDAISRAKKLLEDASSDRLAVSSVLAKIESL.

This sequence belongs to the ATPase epsilon chain family. In terms of assembly, F-type ATPases have 2 components, CF(1) - the catalytic core - and CF(0) - the membrane proton channel. CF(1) has five subunits: alpha(3), beta(3), gamma(1), delta(1), epsilon(1). CF(0) has three main subunits: a, b and c.

The protein localises to the cell inner membrane. Functionally, produces ATP from ADP in the presence of a proton gradient across the membrane. The protein is ATP synthase epsilon chain (atpC) of Helicobacter pylori (strain ATCC 700392 / 26695) (Campylobacter pylori).